A 1139-amino-acid chain; its full sequence is Phospholipid-transporting ATPase tat-1 (1139 aa).

Transmembrane regions (helical) follow at residues 78 to 98 (YTTAVPFLIILSVSALKEIFE), 276 to 296 (IIFLFFVLVALALISATGSEI), and 318 to 338 (SFLWGVLTFFILYNNLIPISL). Aspartate 388 (4-aspartylphosphate intermediate) is an active-site residue. 6 helical membrane passes run 831 to 851 (ICLYIIELWFAMFSAWSGQTI), 855 to 875 (WTIGMFNVIFTAWPPVVLGLF), 901 to 921 (IGNFSLWIGLAIVHSLSLFFL), 935 to 955 (GLTGGWLMLGNCAYTFVVATV), 972 to 992 (VACIGSIGLWIVFVIVYSLVF), and 1013 to 1033 (YTFWLALLFIPLATLLWDLVI).

It belongs to the cation transport ATPase (P-type) (TC 3.A.3) family. Type IV subfamily.

The protein resides in the cell membrane. The protein localises to the early endosome membrane. It is found in the recycling endosome membrane. It carries out the reaction ATP + H2O + phospholipidSide 1 = ADP + phosphate + phospholipidSide 2.. The enzyme catalyses a 1,2-diacyl-sn-glycero-3-phospho-L-serine(out) + ATP + H2O = a 1,2-diacyl-sn-glycero-3-phospho-L-serine(in) + ADP + phosphate + H(+). Functionally, transports phosphatidylserine from the outer to the inner leaflet of the plasma membrane, thereby maintaining the enrichment of this phospholipid in the inner leaflet. Ectopic exposure of phosphatidylserine on the cell surface may result in removal of living cells by neighboring phagocytes. Regulation of the phosphatidylserine distribution in plasma membranes is likely to help in the maintenance and control of the membrane surface charge. Plays a role in the formation of the tubular membrane structure and in membrane trafficking and is specifically involved in the recycling and degradation of endocytic cargo, likely with its chaperone protein chat-1. The protein is Phospholipid-transporting ATPase tat-1 (tat-1) of Caenorhabditis elegans.